Reading from the N-terminus, the 281-residue chain is AT-hook motif nuclear-localized protein 20 (281 aa).

Disordered stretches follow at residues Met43–Phe85 and Met216–Gly247. Positions Arg67–Lys79 form a DNA-binding region, a.T hook. Residues Pro91–His229 enclose the PPC domain.

It is found in the nucleus. Transcription factor that specifically binds AT-rich DNA sequences related to the nuclear matrix attachment regions (MARs). Negatively regulates plant innate immunity (PTI) to pathogens through the down-regulation of the PAMP-triggered NHO1 and FRK1 expression. The protein is AT-hook motif nuclear-localized protein 20 of Arabidopsis thaliana (Mouse-ear cress).